Here is a 346-residue protein sequence, read N- to C-terminus: S-adenosylmethionine:tRNA ribosyltransferase-isomerase (346 aa).

Belongs to the QueA family. As to quaternary structure, monomer.

The protein localises to the cytoplasm. The enzyme catalyses 7-aminomethyl-7-carbaguanosine(34) in tRNA + S-adenosyl-L-methionine = epoxyqueuosine(34) in tRNA + adenine + L-methionine + 2 H(+). The protein operates within tRNA modification; tRNA-queuosine biosynthesis. Its function is as follows. Transfers and isomerizes the ribose moiety from AdoMet to the 7-aminomethyl group of 7-deazaguanine (preQ1-tRNA) to give epoxyqueuosine (oQ-tRNA). This chain is S-adenosylmethionine:tRNA ribosyltransferase-isomerase, found in Neisseria meningitidis serogroup C (strain 053442).